A 463-amino-acid chain; its full sequence is EPD1-interacting receptor-like cytoplasmic serine/threonine-protein kinase (463 aa).

Residues 91–383 (FSSANFLGKG…LTDIPIGPFV (293 aa)) form the Protein kinase domain. Residues 97–105 (LGKGGFGPV) and lysine 126 contribute to the ATP site. Residues tyrosine 171 and tyrosine 173 each carry the phosphotyrosine modification. Residue aspartate 221 is the Proton acceptor of the active site.

Belongs to the protein kinase superfamily. Ser/Thr protein kinase family. As to quaternary structure, interacts with the V.dahliae elicitor EPD1 (AC G2WWH6). Phosphorylated at Tyr-171 and Tyr-173 in the presence of pathogen-associated molecular patterns (PAMPs); this triggers the expression of pathogenesis-related genes.

The protein resides in the cell membrane. The enzyme catalyses L-seryl-[protein] + ATP = O-phospho-L-seryl-[protein] + ADP + H(+). The catalysed reaction is L-threonyl-[protein] + ATP = O-phospho-L-threonyl-[protein] + ADP + H(+). Its function is as follows. Required for pathogen-associated molecular pattern (PAMP, e.g. chitin and flg22)-triggered immunity (PTI) involving reactive oxygen species (ROS) accumulation and triggering plant defense, including defense-related gene expression (e.g. PR1 and LOX). Ensures specific recognition of the EPD1 effector of Verticillium dahliae, resulting in a hypersensitive response known as effector-triggered immunity (ETI), characterized by the activation of programmed cell death to limit infection by the pathogen. Priming plants with the incompatible pathogen V.dahliae leads to an increased resistance to both the broad-host-range filamentous pathogen Botrytis cinerea and the semibiotrophic pathogen Phytophthora capsici, as a result of systemic acquired resistance (SAR). The sequence is that of EPD1-interacting receptor-like cytoplasmic serine/threonine-protein kinase from Nicotiana benthamiana.